A 338-amino-acid polypeptide reads, in one-letter code: Lipoate-protein ligase A (338 aa).

One can recognise a BPL/LPL catalytic domain in the interval 29 to 216 (PATQRVLFLW…AFFAHYGERV (188 aa)). Residues Arg-71, 76–79 (GAVF), and Lys-134 contribute to the ATP site. Residue Lys-134 coordinates (R)-lipoate.

This sequence belongs to the LplA family. As to quaternary structure, monomer.

Its subcellular location is the cytoplasm. It catalyses the reaction L-lysyl-[lipoyl-carrier protein] + (R)-lipoate + ATP = N(6)-[(R)-lipoyl]-L-lysyl-[lipoyl-carrier protein] + AMP + diphosphate + H(+). Its pathway is protein modification; protein lipoylation via exogenous pathway; protein N(6)-(lipoyl)lysine from lipoate: step 1/2. It participates in protein modification; protein lipoylation via exogenous pathway; protein N(6)-(lipoyl)lysine from lipoate: step 2/2. Catalyzes both the ATP-dependent activation of exogenously supplied lipoate to lipoyl-AMP and the transfer of the activated lipoyl onto the lipoyl domains of lipoate-dependent enzymes. The protein is Lipoate-protein ligase A of Shigella sonnei (strain Ss046).